A 204-amino-acid chain; its full sequence is Guanylate kinase (204 aa).

The region spanning 3–181 (GTLYIVSASS…AVSEMSAIFT (179 aa)) is the Guanylate kinase-like domain. ATP is bound at residue 10–17 (ASSGTGKS).

The protein belongs to the guanylate kinase family.

Its subcellular location is the cytoplasm. The catalysed reaction is GMP + ATP = GDP + ADP. Essential for recycling GMP and indirectly, cGMP. This Xylella fastidiosa (strain Temecula1 / ATCC 700964) protein is Guanylate kinase.